The following is a 921-amino-acid chain: AdoMet-dependent rRNA methyltransferase SPB1 (921 aa).

S-adenosyl-L-methionine is bound by residues glycine 58, tryptophan 60, aspartate 78, aspartate 94, and aspartate 119. Lysine 159 (proton acceptor) is an active-site residue. Residues 367–414 (VEEMDEDDQIDDELARLNEEAARKARKERRRKNELRQKKILKMQLQMT) adopt a coiled-coil conformation. Disordered stretches follow at residues 448-476 (ALIQ…DPET), 491-604 (EFKQ…KRSL), 635-713 (ELDE…GKQK), 814-835 (LEKA…EKEK), and 866-921 (RGLK…GPRN). The span at 491-522 (EFKQKQSERDAKFRAKQARLQDAKNDSWHGIK) shows a compositional bias: basic and acidic residues. Composition is skewed to acidic residues over residues 523–542 (DDEE…ESEG), 555–568 (ETFD…EEDE), 635–684 (ELDE…DDFE), and 697–708 (DEEWDLNGEDEE). A coiled-coil region spans residues 796–835 (IKKVAEAKARKKMRTLRRLEKAQKKAETINENEDISEKEK). Basic and acidic residues predominate over residues 814–823 (LEKAQKKAET). The span at 868 to 879 (LKGRPKGTKGRY) shows a compositional bias: basic residues. Residues 880 to 892 (KMVDPRMKKELRA) are compositionally biased toward basic and acidic residues.

The protein belongs to the class I-like SAM-binding methyltransferase superfamily. RNA methyltransferase RlmE family. SPB1 subfamily. Component of the nucleolar and nucleoplasmic pre-60S ribosomal particle.

Its subcellular location is the nucleus. The protein resides in the nucleolus. It carries out the reaction a ribonucleotide in rRNA + S-adenosyl-L-methionine = a 2'-O-methylribonucleotide in rRNA + S-adenosyl-L-homocysteine + H(+). Functionally, required for proper assembly of pre-ribosomal particles during the biogenesis of the 60S ribosomal subunit. The sequence is that of AdoMet-dependent rRNA methyltransferase SPB1 from Mycosarcoma maydis (Corn smut fungus).